A 947-amino-acid polypeptide reads, in one-letter code: Pyruvate, phosphate dikinase 1, chloroplastic (947 aa).

A chloroplast-targeting transit peptide spans 1–62 (MAASVSRAIC…GRGQHCSPLR (62 aa)). The segment at 21-54 (DREATSFARRSVAAPRPPHAKAAGVIRSDSGAGR) is disordered. The residue at position 63 (alanine 63) is an N-acetylalanine; partial. Position 309 is a phosphothreonine (threonine 309). Serine 506 bears the Phosphoserine mark. Threonine 527 is modified (phosphothreonine; by PDRP1). Residue serine 528 is modified to Phosphoserine; by PDRP1. Catalysis depends on histidine 529, which acts as the Tele-phosphohistidine intermediate. Substrate-binding residues include arginine 635, arginine 692, glutamate 821, glycine 842, threonine 843, asparagine 844, and aspartate 845. Position 821 (glutamate 821) interacts with Mg(2+). Aspartate 845 provides a ligand contact to Mg(2+). Cysteine 907 functions as the Proton donor in the catalytic mechanism.

This sequence belongs to the PEP-utilizing enzyme family. In terms of assembly, homotetramer. The cofactor is Mg(2+). Phosphorylation of Thr-527 in the dark inactivates the enzyme, dephosphorylation upon light stimulation reactivates the enzyme. More highly phosphorylated when grown under high rather than low light regimes (70 vs 900 umol photons/m-2/s). the degree of phosphorylation is strictly regulated by light intensity and the light/dark transition has no influence. Phosphorylated in both mesophyll and bundle sheath cells. The phosphorylation at Ser-528 may be important for the phosphorylation at Thr-527 and may also be regulated by light intensity. Isoform C4PPDKZM1 mainly localized in mesophyll cells and only a low level is found in bundle sheath cells. Isoform CYPPDKZM1 expressed in roots, stems and etiolated leaves.

The protein resides in the plastid. It localises to the chloroplast. The protein localises to the cytoplasm. It carries out the reaction pyruvate + phosphate + ATP = phosphoenolpyruvate + AMP + diphosphate + H(+). Its pathway is photosynthesis; C4 acid pathway. With respect to regulation, activated by light-induced dephosphorylation. Inhibited by dark-induced phosphorylation. Both reactions are catalyzed by PDRP1. Inactivated by cold due to the dissociation of the homotetramer. Independent of circadian regulation. Functionally, formation of phosphoenolpyruvate, which is the primary acceptor of CO(2) in C4 and some Crassulacean acid metabolism plants. This Zea mays (Maize) protein is Pyruvate, phosphate dikinase 1, chloroplastic.